A 213-amino-acid polypeptide reads, in one-letter code: Transmembrane emp24 domain-containing protein p24delta8 (213 aa).

The N-terminal stretch at 1 to 22 (MDLCRSSILLLIIALLSPRTLS) is a signal peptide. At 23–180 (MRYELKSSKT…QELNRSTNSK (158 aa)) the chain is on the lumenal side. Positions 32–148 (TKCIGEEIHE…VDMMEYQVKT (117 aa)) constitute a GOLD domain. An N-linked (GlcNAc...) asparagine glycan is attached at asparagine 97. Residues 163–176 (LREREEEMQELNRS) adopt a coiled-coil conformation. Arginine 166 bears the Omega-N-methylated arginine mark. Residue asparagine 174 is glycosylated (N-linked (GlcNAc...) asparagine). Residues 181–203 (MAWLSFGSLVVCLSVAGLQFWHL) form a helical membrane-spanning segment. The tract at residues 202–213 (HLKTFFEKKKLI) is interaction with ARF1. Over 204–213 (KTFFEKKKLI) the chain is Cytoplasmic. Positions 206-207 (FF) match the COPII vesicle coat-binding motif. The COPI vesicle coat-binding motif lies at 206-213 (FFEKKKLI).

It belongs to the EMP24/GP25L family. In terms of assembly, probably oligomerizes with other members of the EMP24/GP25L family. Associates with the COPI vesicle coat (coatomer). Associates with the COPII vesicle coat (coatomer). Interacts with ARF1 (GDP-bound).

It localises to the endoplasmic reticulum membrane. The protein localises to the golgi apparatus. It is found in the cis-Golgi network membrane. Its subcellular location is the golgi stack membrane. Involved in vesicular protein trafficking. Mainly functions in the early secretory pathway. Thought to act as cargo receptor at the lumenal side for incorporation of secretory cargo molecules into transport vesicles and to be involved in vesicle coat formation at the cytoplasmic side. On Golgi membranes, acts as a primary receptor for ARF1-GDP which is involved in COPI-vesicle formation. The protein is Transmembrane emp24 domain-containing protein p24delta8 of Arabidopsis thaliana (Mouse-ear cress).